The primary structure comprises 77 residues: DNA-directed RNA polymerase subunit epsilon (77 aa).

This sequence belongs to the RNA polymerase subunit epsilon family. RNAP is composed of a core of 2 alpha, a beta and a beta' subunit. The core is associated with a delta subunit, and at least one of epsilon or omega. When a sigma factor is associated with the core the holoenzyme is formed, which can initiate transcription.

It carries out the reaction RNA(n) + a ribonucleoside 5'-triphosphate = RNA(n+1) + diphosphate. In terms of biological role, a non-essential component of RNA polymerase (RNAP). In Streptococcus pneumoniae (strain P1031), this protein is DNA-directed RNA polymerase subunit epsilon.